The chain runs to 99 residues: Malonate decarboxylase acyl carrier protein (99 aa).

Residue serine 25 is modified to O-(phosphoribosyl dephospho-coenzyme A)serine.

The protein belongs to the MdcC family. In terms of processing, covalently binds the prosthetic group of malonate decarboxylase.

Its subcellular location is the cytoplasm. In terms of biological role, subunit of malonate decarboxylase, it is an acyl carrier protein to which acetyl and malonyl thioester residues are bound via a 2'-(5''-phosphoribosyl)-3'-dephospho-CoA prosthetic group and turn over during the catalytic mechanism. The protein is Malonate decarboxylase acyl carrier protein of Pseudomonas savastanoi pv. phaseolicola (strain 1448A / Race 6) (Pseudomonas syringae pv. phaseolicola (strain 1448A / Race 6)).